A 339-amino-acid polypeptide reads, in one-letter code: Heat-inducible transcription repressor HrcA (339 aa).

Belongs to the HrcA family.

Its function is as follows. Negative regulator of class I heat shock genes (grpE-dnaK-dnaJ and groELS operons). Prevents heat-shock induction of these operons. The protein is Heat-inducible transcription repressor HrcA of Clostridium perfringens (strain SM101 / Type A).